Reading from the N-terminus, the 265-residue chain is Glycine/sarcosine N-methyltransferase (265 aa).

S-adenosyl-L-methionine is bound by residues Y28, W36, R45, A69, D90, 116–117, and L134; that span reads DW. Positions 136, 169, and 208 each coordinate substrate.

It belongs to the class I-like SAM-binding methyltransferase superfamily. Glycine N-methyltransferase family. Monomer.

It carries out the reaction glycine + 2 S-adenosyl-L-methionine = N,N-dimethylglycine + 2 S-adenosyl-L-homocysteine + 2 H(+). The enzyme catalyses glycine + S-adenosyl-L-methionine = sarcosine + S-adenosyl-L-homocysteine + H(+). It catalyses the reaction sarcosine + S-adenosyl-L-methionine = N,N-dimethylglycine + S-adenosyl-L-homocysteine + H(+). It functions in the pathway amine and polyamine biosynthesis; betaine biosynthesis via glycine pathway; betaine from glycine: step 1/3. The protein operates within amine and polyamine biosynthesis; betaine biosynthesis via glycine pathway; betaine from glycine: step 2/3. Inhibited by acetate, dimethylglycine and S-adenosyl-L-homocysteine. Its function is as follows. Catalyzes the methylation of glycine and sarcosine to sarcosine and dimethylglycine, respectively, with S-adenosylmethionine (AdoMet) acting as the methyl donor. This chain is Glycine/sarcosine N-methyltransferase, found in Aphanothece halophytica.